Reading from the N-terminus, the 367-residue chain is DNA replication and repair protein RecF (367 aa).

Residue 30 to 37 (GENAQGKT) participates in ATP binding.

The protein belongs to the RecF family.

It localises to the cytoplasm. Its function is as follows. The RecF protein is involved in DNA metabolism; it is required for DNA replication and normal SOS inducibility. RecF binds preferentially to single-stranded, linear DNA. It also seems to bind ATP. This chain is DNA replication and repair protein RecF, found in Chlamydia abortus (strain DSM 27085 / S26/3) (Chlamydophila abortus).